The chain runs to 329 residues: Alpha/beta hydrolase domain-containing protein 17C (329 aa).

Residues 46–85 (APEQRGPGAPAPASAASTSSASAAAQPAPQQPEEGGAGPG) are disordered. Residues 51-79 (GPGAPAPASAASTSSASAAAQPAPQQPEE) show a composition bias toward low complexity. Active-site charge relay system residues include Ser-211, Asp-276, and His-305.

It belongs to the AB hydrolase superfamily. ABHD17 family. In terms of processing, palmitoylated on cysteine residues located in a cysteine cluster at the N-terminus which promotes membrane localization. Palmitoylation is required for post-synaptic localization and for depalmitoylating activity towards DLG4/PSD95.

The protein localises to the recycling endosome membrane. It localises to the cell projection. Its subcellular location is the dendritic spine. It is found in the postsynaptic density membrane. It catalyses the reaction S-hexadecanoyl-L-cysteinyl-[protein] + H2O = L-cysteinyl-[protein] + hexadecanoate + H(+). In terms of biological role, hydrolyzes fatty acids from S-acylated cysteine residues in proteins. Has depalmitoylating activity towards NRAS and DLG4/PSD95. This chain is Alpha/beta hydrolase domain-containing protein 17C, found in Bos taurus (Bovine).